The primary structure comprises 123 residues: MRLRRLAGRRPRRRYVAFEVLSLDGPPPGKGEFEEALRGVYLKAFGAESLALARPRIVYYEEESGRGVVAVVRDYRYHILAALGLVRMAGGRRVLVVPLRTSGTVKGALRAFRSPGAPGRGGV.

The protein belongs to the eukaryotic/archaeal RNase P protein component 2 family. As to quaternary structure, consists of a catalytic RNA component and at least 4 protein subunits.

The catalysed reaction is Endonucleolytic cleavage of RNA, removing 5'-extranucleotides from tRNA precursor.. Part of ribonuclease P, a protein complex that generates mature tRNA molecules by cleaving their 5'-ends. This is Ribonuclease P protein component 2 from Aeropyrum pernix (strain ATCC 700893 / DSM 11879 / JCM 9820 / NBRC 100138 / K1).